We begin with the raw amino-acid sequence, 445 residues long: D-serine transporter DsdX (445 aa).

At 1-4 (MHSQ) the chain is on the cytoplasmic side. A helical transmembrane segment spans residues 5–25 (IWVVSTLLISIVLIVLTIVKF). Residues 26 to 28 (KFH) lie on the Periplasmic side of the membrane. The chain crosses the membrane as a helical span at residues 29–49 (PFLALLLASFFVGTMMGMGPL). Residues 50-56 (DMVNAIE) lie on the Cytoplasmic side of the membrane. The chain crosses the membrane as a helical span at residues 57–77 (SGIGGTLGFLAAVIGLGTILG). The Periplasmic portion of the chain corresponds to 78–105 (KMMEVSGAAERIGLTLQRCRWLSVDVIM). A helical membrane pass occupies residues 106–126 (VLVGLICGITLFVEVGVVLLI). Topologically, residues 127 to 139 (PLAFSIAKKTNTS) are cytoplasmic. Residues 140–160 (LLKLAIPLCTALMAVHCVVPP) form a helical membrane-spanning segment. The Periplasmic segment spans residues 161-177 (HPAALYVANKLGADIGS). The helical transmembrane segment at 178–198 (VIVYGLLVGLMASLIGGPLFL) threads the bilayer. At 199–223 (KFLGQRLPFKPVPTEFADLKVRDEK) the chain is on the cytoplasmic side. Residues 224–244 (TLPSLGATLFTILLPIALMLV) form a helical membrane-spanning segment. Over 245–257 (KTIAELNMARESG) the chain is Periplasmic. Residues 258-278 (LYILVEFIGNPITAMFIAVFV) traverse the membrane as a helical segment. The Cytoplasmic segment spans residues 279–301 (AYYVLGIRQHMSMGTMLTHTENG). A helical transmembrane segment spans residues 302–322 (FGSIANILLIIGAGGAFNAIL). Over 323–342 (KSSSLADTLAVILSNMHMHP) the chain is Periplasmic. The next 3 membrane-spanning stretches (helical) occupy residues 343 to 363 (ILLAWLVALILHAAVGSATVA), 364 to 384 (MMGATAIVAPMLPLYPDISPE), and 385 to 405 (IIAIAIGSGAIGCTIVTDSLF). Topologically, residues 406–424 (WLVKQYCGATLNETFKYYT) are cytoplasmic. The chain crosses the membrane as a helical span at residues 425 to 445 (TATFIASVVALAGTFLLSFII).

The protein belongs to the GntP permease family.

The protein resides in the cell inner membrane. A D-serine-specific transporter, may function as a H(+) symporter. In Escherichia coli (strain K12), this protein is D-serine transporter DsdX.